Here is a 132-residue protein sequence, read N- to C-terminus: Large ribosomal subunit protein uL14 (132 aa).

The protein belongs to the universal ribosomal protein uL14 family. Part of the 50S ribosomal subunit. Forms a cluster with proteins L3 and L24e, part of which may contact the 16S rRNA in 2 intersubunit bridges.

Its function is as follows. Binds to 23S rRNA. Forms part of two intersubunit bridges in the 70S ribosome. The polypeptide is Large ribosomal subunit protein uL14 (Halorubrum lacusprofundi (strain ATCC 49239 / DSM 5036 / JCM 8891 / ACAM 34)).